A 477-amino-acid polypeptide reads, in one-letter code: PTS system glucose-specific EIICB component (477 aa).

The PTS EIIC type-1 domain maps to 1–388; sequence MFKNVFANLQ…FNLDTPGREN (388 aa). Transmembrane regions (helical) follow at residues 15 to 35, 51 to 71, 76 to 96, 112 to 132, 152 to 172, 191 to 211, 250 to 270, 280 to 300, 304 to 324, and 357 to 377; these read SLML…IGSA, TGGS…ALGF, GVAA…LTAV, HLSD…AYMF, FVPI…SLIW, PILA…FGLH, LSGG…AIWH, IGSI…TEPI, FIIV…LSFP, and FPII…LFII. The region spanning 399 to 477 is the PTS EIIB type-1 domain; it reads NEIAPYIITA…TAMDECIKNI (79 aa). Cys421 serves as the catalytic Phosphocysteine intermediate; for EIIB activity. At Cys421 the chain carries Phosphocysteine.

Its subcellular location is the cell inner membrane. The catalysed reaction is N(pros)-phospho-L-histidyl-[protein] + D-glucose(out) = D-glucose 6-phosphate(in) + L-histidyl-[protein]. Functionally, the phosphoenolpyruvate-dependent sugar phosphotransferase system (sugar PTS), a major carbohydrate active transport system, catalyzes the phosphorylation of incoming sugar substrates concomitantly with their translocation across the cell membrane. The enzyme II complex composed of PtsG and Crr is involved in glucose transport. In Buchnera aphidicola subsp. Acyrthosiphon pisum (strain APS) (Acyrthosiphon pisum symbiotic bacterium), this protein is PTS system glucose-specific EIICB component (ptsG).